The chain runs to 602 residues: Zinc finger protein 652-B (602 aa).

Residues 60 to 232 (FQDSKPTNEV…PSDKAKSEEK (173 aa)) form a disordered region. Residues 65-79 (PTNEVHAVKGERENS) are compositionally biased toward basic and acidic residues. Composition is skewed to acidic residues over residues 80–108 (GESEEEEDEDDDDDDDDDDDDEEGEDEDE) and 148–167 (DDEGGDSGEDDQDSHEDEEN). Basic and acidic residues predominate over residues 222 to 232 (SPSDKAKSEEK). A C2H2-type 1 zinc finger spans residues 235–258 (LTCDKCPRVFNTRWYLEKHMNVTH). The C2H2-type 2; degenerate zinc finger occupies 262–284 (QICDKCGKKFVLESELSLHLQTD). C2H2-type zinc fingers lie at residues 289-312 (IQCITCNKTFKKLWSLHEHIKIVH), 319-341 (FSCEICEKKFYTMAHVRKHLVAH), 347-369 (FTCETCGKSFKRSMSLKVHSLQH), 375-397 (FRCENCDERFQYKYQLRSHMSIH), 403-425 (FMCQWCGKDFNMKQYFDEHMKTH), and 431-453 (FICEICGKSFTSRPNMKRHRRTH). A C2H2-type 9; degenerate zinc finger spans residues 459–482 (YPCDVCGMRFRFSNMLKAHKEKCF). The interval 543–575 (PFSHLHLHPHSHTHHLAVPPVPHLPPPPALFKS) is disordered. Residues 545–557 (SHLHLHPHSHTHH) are compositionally biased toward basic residues. Residues 561-571 (PPVPHLPPPPA) are compositionally biased toward pro residues.

Belongs to the krueppel C2H2-type zinc-finger protein family.

It is found in the nucleus. In terms of biological role, may be involved in transcriptional regulation. This Xenopus laevis (African clawed frog) protein is Zinc finger protein 652-B (znf652-b).